Reading from the N-terminus, the 388-residue chain is Succinate--CoA ligase [ADP-forming] subunit beta (388 aa).

One can recognise an ATP-grasp domain in the interval 9–244; it reads KQLFAEYGLP…PSQEDSREAH (236 aa). ATP-binding positions include Lys46, 53–55, Glu99, Thr102, and Glu107; that span reads GRG. Asn199 and Asp213 together coordinate Mg(2+). Residues Asn264 and 321–323 each bind substrate; that span reads GIV.

Belongs to the succinate/malate CoA ligase beta subunit family. In terms of assembly, heterotetramer of two alpha and two beta subunits. Mg(2+) serves as cofactor.

The enzyme catalyses succinate + ATP + CoA = succinyl-CoA + ADP + phosphate. It catalyses the reaction GTP + succinate + CoA = succinyl-CoA + GDP + phosphate. The protein operates within carbohydrate metabolism; tricarboxylic acid cycle; succinate from succinyl-CoA (ligase route): step 1/1. Succinyl-CoA synthetase functions in the citric acid cycle (TCA), coupling the hydrolysis of succinyl-CoA to the synthesis of either ATP or GTP and thus represents the only step of substrate-level phosphorylation in the TCA. The beta subunit provides nucleotide specificity of the enzyme and binds the substrate succinate, while the binding sites for coenzyme A and phosphate are found in the alpha subunit. In Pseudoalteromonas translucida (strain TAC 125), this protein is Succinate--CoA ligase [ADP-forming] subunit beta.